The following is a 22-amino-acid chain: 50 kDa cell wall protein (22 aa).

The protein localises to the secreted. Its subcellular location is the cell wall. This Nicotiana tabacum (Common tobacco) protein is 50 kDa cell wall protein.